The chain runs to 139 residues: uncharacterized protein (139 aa).

The segment at 1–116 (MYNPWQVGAS…TRPRVVARGK (116 aa)) is disordered. Composition is skewed to low complexity over residues 50-70 (RPRP…GPRP) and 84-110 (LPAY…TRPR).

This is an uncharacterized protein from Homo sapiens (Human).